The chain runs to 324 residues: Quinolinate synthase (324 aa).

His39 and Ser56 together coordinate iminosuccinate. Cys101 contacts [4Fe-4S] cluster. Iminosuccinate is bound by residues 127–129 (YIN) and Ser144. Cys187 is a [4Fe-4S] cluster binding site. Iminosuccinate contacts are provided by residues 213–215 (HPE) and Thr230. Cys280 serves as a coordination point for [4Fe-4S] cluster.

This sequence belongs to the quinolinate synthase family. Type 2 subfamily. The cofactor is [4Fe-4S] cluster.

Its subcellular location is the cytoplasm. It carries out the reaction iminosuccinate + dihydroxyacetone phosphate = quinolinate + phosphate + 2 H2O + H(+). It functions in the pathway cofactor biosynthesis; NAD(+) biosynthesis; quinolinate from iminoaspartate: step 1/1. Functionally, catalyzes the condensation of iminoaspartate with dihydroxyacetone phosphate to form quinolinate. The chain is Quinolinate synthase from Nostoc punctiforme (strain ATCC 29133 / PCC 73102).